A 161-amino-acid polypeptide reads, in one-letter code: Protein-export protein SecB (161 aa).

It belongs to the SecB family. As to quaternary structure, homotetramer, a dimer of dimers. One homotetramer interacts with 1 SecA dimer.

The protein localises to the cytoplasm. Functionally, one of the proteins required for the normal export of preproteins out of the cell cytoplasm. It is a molecular chaperone that binds to a subset of precursor proteins, maintaining them in a translocation-competent state. It also specifically binds to its receptor SecA. This is Protein-export protein SecB from Pseudomonas putida (strain ATCC 700007 / DSM 6899 / JCM 31910 / BCRC 17059 / LMG 24140 / F1).